The sequence spans 461 residues: Steroidogenic factor 1 (461 aa).

The nuclear receptor DNA-binding region spans 10–85 (DELCPVCGDK…VGMRLEAVRA (76 aa)). The NR C4-type zinc-finger motif lies at 13-33 (CPVCGDKVSGYHYGLLTCESC). An N6-acetyllysine mark is found at Lys-34, Lys-38, and Lys-72. An NR C4-type zinc finger spans residues 49-73 (CTESQSCKIDKTQRKRCPFCRFQKC). A Glycyl lysine isopeptide (Lys-Gly) (interchain with G-Cter in SUMO) cross-link involves residue Lys-119. The interval 119–150 (KLETGPPMGVAPPPPPPPDYMLPPGLHAPEPK) is disordered. The segment covering 127–139 (GVAPPPPPPPDYM) has biased composition (pro residues). Lys-194 is covalently cross-linked (Glycyl lysine isopeptide (Lys-Gly) (interchain with G-Cter in SUMO)). Ser-203 carries the phosphoserine; by CDK7 modification. Residues 222 to 459 (GVPELIVQLL…NLLIEMLQAK (238 aa)) form the NR LBD domain. An important for dimerization region spans residues 230–461 (LLQLEPDEDQ…LIEMLQAKQT (232 aa)). Positions 341, 436, and 440 each coordinate a 1,2-diacyl-sn-glycero-3-phosphocholine.

It belongs to the nuclear hormone receptor family. NR5 subfamily. In terms of assembly, binds DNA as a monomer. Part of a complex consisting of SFPQ, NONO and NR5A1. Interacts with NR0B2, NCOA2 and PPARGC1A. Interacts with DGKQ and CDK7. Binds to and activated by HIPK3. Acetylation stimulates the transcriptional activity. In terms of processing, sumoylation reduces CDK7-mediated phosphorylation on Ser-203. Post-translationally, phosphorylated on Ser-203 by CDK7. This phosphorylation promotes transcriptional activity.

It localises to the nucleus. Transcriptional activator. Seems to be essential for sexual differentiation and formation of the primary steroidogenic tissues. Binds to the Ad4 site found in the promoter region of steroidogenic P450 genes such as CYP11A, CYP11B and CYP21B. Also regulates the AMH/Muellerian inhibiting substance gene as well as the AHCH and STAR genes. 5'-YCAAGGYC-3' and 5'-RRAGGTCA-3' are the consensus sequences for the recognition by NR5A1. The SFPQ-NONO-NR5A1 complex binds to the CYP17 promoter and regulates basal and cAMP-dependent transcriptional activity. Binds phosphatidylcholine and phospholipids with a phosphatidylinositol (PI) headgroup, in particular PI(3,4)P2 and PI(3,4,5)P3. Activated by the phosphorylation of NR5A1 by HIPK3 leading to increased steroidogenic gene expression upon cAMP signaling pathway stimulation. The protein is Steroidogenic factor 1 (NR5A1) of Sus scrofa (Pig).